Consider the following 313-residue polypeptide: E3 ubiquitin-protein ligase RNF126 (313 aa).

Ala-2 is modified (N-acetylalanine). The residue at position 5 (Ser-5) is a Phosphoserine. The tract at residues Ser-5 to Ala-100 is required for interaction with BAG6. Zn(2+) contacts are provided by Cys-13, Cys-16, Cys-29, and Cys-32. The segment at Cys-13 to Cys-32 adopts a C4-type zinc-finger fold. 2 disordered regions span residues Glu-42 to Gln-63 and Thr-95 to Arg-128. Residues Thr-47–Gln-63 show a composition bias toward polar residues. A compositionally biased stretch (basic and acidic residues) spans Asp-103–His-116. Positions Gln-117–Arg-128 are enriched in basic residues. The interval Thr-202–Asn-306 is sufficient for interaction with AICDA. The RING-type zinc-finger motif lies at Cys-231–Arg-272. Residues Asn-279–Ser-313 form a disordered region. The segment covering Ser-293 to Ser-313 has biased composition (low complexity).

Interacts with CCDC50, EGFR, FLT3 and SCAMP3. Interacts with BAG6 (via ubiquitin-like domain); required for BAG6-dependent ubiquitination of proteins mislocalized to the cytosol. Interacts with CDKN1A. Interacts with AICDA. Post-translationally, ubiquitinated. May undergo autoubiquitination. Detected in B-cells (at protein level).

The protein resides in the cytoplasm. It is found in the nucleus. The catalysed reaction is S-ubiquitinyl-[E2 ubiquitin-conjugating enzyme]-L-cysteine + [acceptor protein]-L-lysine = [E2 ubiquitin-conjugating enzyme]-L-cysteine + N(6)-ubiquitinyl-[acceptor protein]-L-lysine.. It participates in protein modification; protein ubiquitination. E3 ubiquitin-protein ligase that mediates ubiquitination oF target proteins. Depending on the associated E2 ligase, mediates 'Lys-27'-, 'Lys-29'-, 'Lys-48'- and/or 'Lys-63'-linked polyubiquitination of substrates. Part of a BAG6-dependent quality control process ensuring that proteins of the secretory pathway that are mislocalized to the cytosol are degraded by the proteasome. Probably acts by providing the ubiquitin ligase activity associated with the BAG6 complex and be responsible for ubiquitination of the hydrophobic mislocalized proteins and their targeting to the proteasome. May also play a role in the endosomal recycling of IGF2R, the cation-independent mannose-6-phosphate receptor. May play a role in the endosomal sorting and degradation of several membrane receptors including EGFR, FLT3, MET and CXCR4, by mediating their ubiquitination. By ubiquitinating CDKN1A/p21 and targeting it for degradation, may also promote cell proliferation. May monoubiquitinate AICDA. Acts as a regulator of DNA repair by mediating 'Lys-27'- and 'Lys-29'-linked polyubiquitination of MRE11, thereby promoting the exonuclease activity of MRE11. The protein is E3 ubiquitin-protein ligase RNF126 of Mus musculus (Mouse).